Consider the following 394-residue polypeptide: DNA primase large subunit PriL (394 aa).

[4Fe-4S] cluster contacts are provided by Cys-231, Cys-340, Cys-351, and Cys-357.

It belongs to the eukaryotic-type primase large subunit family. Heterodimer of a small subunit (PriS) and a large subunit (PriL). It depends on [4Fe-4S] cluster as a cofactor.

Functionally, regulatory subunit of DNA primase, an RNA polymerase that catalyzes the synthesis of short RNA molecules used as primers for DNA polymerase during DNA replication. Stabilizes and modulates the activity of the small subunit, increasing the rate of DNA synthesis, and conferring RNA synthesis capability. The DNA polymerase activity may enable DNA primase to also catalyze primer extension after primer synthesis. May also play a role in DNA repair. The polypeptide is DNA primase large subunit PriL (Pyrococcus horikoshii (strain ATCC 700860 / DSM 12428 / JCM 9974 / NBRC 100139 / OT-3)).